The chain runs to 120 residues: Aspartate 1-decarboxylase (120 aa).

Residue Ser-25 is the Schiff-base intermediate with substrate; via pyruvic acid of the active site. The residue at position 25 (Ser-25) is a Pyruvic acid (Ser). Position 57 (Thr-57) interacts with substrate. Catalysis depends on Tyr-58, which acts as the Proton donor. 73 to 75 (GAA) is a substrate binding site.

It belongs to the PanD family. As to quaternary structure, heterooctamer of four alpha and four beta subunits. Pyruvate is required as a cofactor. Is synthesized initially as an inactive proenzyme, which is activated by self-cleavage at a specific serine bond to produce a beta-subunit with a hydroxyl group at its C-terminus and an alpha-subunit with a pyruvoyl group at its N-terminus.

The protein localises to the cytoplasm. The catalysed reaction is L-aspartate + H(+) = beta-alanine + CO2. It functions in the pathway cofactor biosynthesis; (R)-pantothenate biosynthesis; beta-alanine from L-aspartate: step 1/1. In terms of biological role, catalyzes the pyruvoyl-dependent decarboxylation of aspartate to produce beta-alanine. The polypeptide is Aspartate 1-decarboxylase (Polynucleobacter asymbioticus (strain DSM 18221 / CIP 109841 / QLW-P1DMWA-1) (Polynucleobacter necessarius subsp. asymbioticus)).